We begin with the raw amino-acid sequence, 759 residues long: NADP-dependent malic enzyme (759 aa).

The tract at residues 1 to 428 (MDEQLKQSAL…KLTEFVYKTN (428 aa)) is malic enzyme. The Proton donor role is filled by Tyr39. Lys94 serves as the catalytic Proton acceptor. Positions 136, 137, and 162 each coordinate a divalent metal cation. Residues 195–198 (AGAA), Asn288, and Asn320 contribute to the NADP(+) site. The interval 429 to 759 (LFMKPIFSQA…AVVEAQTTPL (331 aa)) is phosphate acetyltransferase.

The protein in the N-terminal section; belongs to the malic enzymes family. In the C-terminal section; belongs to the phosphate acetyltransferase and butyryltransferase family. It depends on Mg(2+) as a cofactor. Mn(2+) serves as cofactor.

The enzyme catalyses (S)-malate + NADP(+) = pyruvate + CO2 + NADPH. The catalysed reaction is oxaloacetate + H(+) = pyruvate + CO2. This Salmonella typhimurium (strain LT2 / SGSC1412 / ATCC 700720) protein is NADP-dependent malic enzyme (maeB).